Here is a 342-residue protein sequence, read N- to C-terminus: Pre-mRNA-splicing factor 18 (342 aa).

Residue methionine 1 is modified to N-acetylmethionine.

Belongs to the PRP18 family. Heterodimer with PPIH. Interacts with PRPF4 and with the spliceosome. Part of a complex containing U4/U6 snRNPs.

It localises to the nucleus speckle. In terms of biological role, participates in the second step of pre-mRNA splicing. In Mus musculus (Mouse), this protein is Pre-mRNA-splicing factor 18 (Prpf18).